Reading from the N-terminus, the 460-residue chain is Argininosuccinate lyase (460 aa).

It belongs to the lyase 1 family. Argininosuccinate lyase subfamily.

It localises to the cytoplasm. It catalyses the reaction 2-(N(omega)-L-arginino)succinate = fumarate + L-arginine. The protein operates within amino-acid biosynthesis; L-arginine biosynthesis; L-arginine from L-ornithine and carbamoyl phosphate: step 3/3. The protein is Argininosuccinate lyase of Alkaliphilus metalliredigens (strain QYMF).